A 183-amino-acid polypeptide reads, in one-letter code: Segregation and condensation protein B (183 aa).

Belongs to the ScpB family. In terms of assembly, homodimer. Homodimerization may be required to stabilize the binding of ScpA to the Smc head domains. Component of a cohesin-like complex composed of ScpA, ScpB and the Smc homodimer, in which ScpA and ScpB bind to the head domain of Smc. The presence of the three proteins is required for the association of the complex with DNA.

The protein localises to the cytoplasm. Its function is as follows. Participates in chromosomal partition during cell division. May act via the formation of a condensin-like complex containing Smc and ScpA that pull DNA away from mid-cell into both cell halves. The sequence is that of Segregation and condensation protein B from Streptococcus pyogenes serotype M12 (strain MGAS2096).